Reading from the N-terminus, the 690-residue chain is uncharacterized protein (690 aa).

The segment at 553–601 (DESELLENEDKSESLENEDKSESLENEDKSESLENEDKSESLENEKKEK) is disordered. Basic and acidic residues predominate over residues 560–601 (NEDKSESLENEDKSESLENEDKSESLENEDKSESLENEKKEK).

This sequence belongs to the glycosyltransferase 2 family.

This is an uncharacterized protein from Rickettsia bellii (strain RML369-C).